Here is a 198-residue protein sequence, read N- to C-terminus: Imidazoleglycerol-phosphate dehydratase (198 aa).

It belongs to the imidazoleglycerol-phosphate dehydratase family.

Its subcellular location is the cytoplasm. The catalysed reaction is D-erythro-1-(imidazol-4-yl)glycerol 3-phosphate = 3-(imidazol-4-yl)-2-oxopropyl phosphate + H2O. Its pathway is amino-acid biosynthesis; L-histidine biosynthesis; L-histidine from 5-phospho-alpha-D-ribose 1-diphosphate: step 6/9. The protein is Imidazoleglycerol-phosphate dehydratase of Janthinobacterium sp. (strain Marseille) (Minibacterium massiliensis).